The sequence spans 135 residues: Insoluble matrix shell protein 5 (135 aa).

Residues 1 to 16 (MILVVTLACLIAVVCC) form the signal peptide. EF-hand domains follow at residues 21–56 (TDQG…ADLN) and 93–128 (IEFV…TVRP). Ca(2+) contacts are provided by D34, D36, N38, K40, E45, D106, N108, D110, E112, and E117.

Component of the acid-insoluble organic matrix of the calcified shell.

Its subcellular location is the secreted. The sequence is that of Insoluble matrix shell protein 5 from Ruditapes philippinarum (Japanese carpet shell).